Reading from the N-terminus, the 171-residue chain is Inosine/xanthosine triphosphatase (171 aa).

Residue 8–13 participates in substrate binding; it reads TTNPAK. Residues D38 and Q68 each coordinate Mg(2+).

Belongs to the YjjX NTPase family. Homodimer. Requires Mg(2+) as cofactor. It depends on Mn(2+) as a cofactor.

The catalysed reaction is XTP + H2O = XDP + phosphate + H(+). It catalyses the reaction ITP + H2O = IDP + phosphate + H(+). In terms of biological role, phosphatase that hydrolyzes non-canonical purine nucleotides such as XTP and ITP to their respective diphosphate derivatives. Probably excludes non-canonical purines from DNA/RNA precursor pool, thus preventing their incorporation into DNA/RNA and avoiding chromosomal lesions. This Cronobacter sakazakii (strain ATCC BAA-894) (Enterobacter sakazakii) protein is Inosine/xanthosine triphosphatase.